The primary structure comprises 376 residues: Succinyl-diaminopimelate desuccinylase (376 aa).

Residue His-66 coordinates Zn(2+). The active site involves Asp-68. Residue Asp-99 coordinates Zn(2+). The active-site Proton acceptor is the Glu-133. 3 residues coordinate Zn(2+): Glu-134, Glu-162, and His-349.

Belongs to the peptidase M20A family. DapE subfamily. Homodimer. The cofactor is Zn(2+). Co(2+) is required as a cofactor.

The enzyme catalyses N-succinyl-(2S,6S)-2,6-diaminopimelate + H2O = (2S,6S)-2,6-diaminopimelate + succinate. It participates in amino-acid biosynthesis; L-lysine biosynthesis via DAP pathway; LL-2,6-diaminopimelate from (S)-tetrahydrodipicolinate (succinylase route): step 3/3. In terms of biological role, catalyzes the hydrolysis of N-succinyl-L,L-diaminopimelic acid (SDAP), forming succinate and LL-2,6-diaminopimelate (DAP), an intermediate involved in the bacterial biosynthesis of lysine and meso-diaminopimelic acid, an essential component of bacterial cell walls. The chain is Succinyl-diaminopimelate desuccinylase from Vesicomyosocius okutanii subsp. Calyptogena okutanii (strain HA).